The chain runs to 476 residues: MDLLFLFFSLLLSYLFFKIWKLIDSKQDKDCYILDYQCHKPTDDRMVSTQFSGEIIYRNQNLGLTEYKFLLKAIVSSGIGEQTYAPRLVFEGREERPSLQDGISEMEEFYVDSIGKLLERNQISPKDIDILVVNVSMLSSTPSLASRIINHYKMRDDVKVFNLTGMGCSASLISVDIVKNIFKSYANKLALVATSESLSPNWYSGNNRSMILANCLFRSGGCAILLTNKRSLRKKAMFKLKCMVRTHHGAREESYNCCIQAEDEQGRVGFYLGKNLPKAATRAFVENLKVITPKILPVTELIRFMLKLLIKKIKIRQNPSKGSTNLPPGTPLKAGINFKTGIEHFCIHTGGKAVIDGIGHSLDLNEYDIEPARMTLHRFGNTSASSLWYVLAYMEAKKRLKRGDRVFMISFGAGFKCNSCVWEVVRDLTGGESKGNVWNHCIDDYPPKSILNPYLEKFGWIQDEDPDTFKVPDAFM.

An N-terminal signal peptide occupies residues 1–25; that stretch reads MDLLFLFFSLLLSYLFFKIWKLIDS. Positions 26–313 constitute an FAE domain; it reads KQDKDCYILD…FMLKLLIKKI (288 aa). Active-site residues include Cys168, His247, His344, His348, His377, and Asn381.

This sequence belongs to the thiolase-like superfamily. Chalcone/stilbene synthases family. As to expression, expressed in siliques, flowers and leaves.

It is found in the endoplasmic reticulum. It carries out the reaction a very-long-chain acyl-CoA + malonyl-CoA + H(+) = a very-long-chain 3-oxoacyl-CoA + CO2 + CoA. The protein operates within lipid metabolism; fatty acid biosynthesis. This chain is 3-ketoacyl-CoA synthase 12, found in Arabidopsis thaliana (Mouse-ear cress).